A 421-amino-acid chain; its full sequence is Phosphoglycerate kinase, cytosolic (421 aa).

The (2R)-3-phosphoglycerate site is built by V23, D24, F25, N26, R39, S61, H62, G64, R65, R135, H172, and R173. 2 residues coordinate ADP: G218 and A219. G218 is a CDP binding site. AMP is bound by residues A219 and K220. Residue A219 participates in ATP binding. A219 lines the Mg(2+) pocket. Position 220 (K220) interacts with (2R)-3-phosphoglycerate. CDP is bound at residue D223. D223 contacts Mg(2+). ADP is bound by residues K224 and G242. An AMP-binding site is contributed by K224. ATP is bound at residue K224. A CDP-binding site is contributed by G242. AMP contacts are provided by A243 and A315. ATP-binding residues include A243 and A315. A315 and N339 together coordinate ADP. The CDP site is built by G340 and F345. ADP contacts are provided by F345, E346, D378, and S379. Residue E346 coordinates AMP. The ATP site is built by E346, D378, and S379. Mg(2+) is bound at residue D378.

This sequence belongs to the phosphoglycerate kinase family. In terms of assembly, monomer. It depends on Mg(2+) as a cofactor.

It is found in the cytoplasm. It catalyses the reaction (2R)-3-phosphoglycerate + ATP = (2R)-3-phospho-glyceroyl phosphate + ADP. It participates in carbohydrate degradation; glycolysis; pyruvate from D-glyceraldehyde 3-phosphate: step 2/5. In Trypanosoma brucei brucei, this protein is Phosphoglycerate kinase, cytosolic.